Consider the following 94-residue polypeptide: Co-chaperonin GroES (94 aa).

It belongs to the GroES chaperonin family. Heptamer of 7 subunits arranged in a ring. Interacts with the chaperonin GroEL.

It is found in the cytoplasm. In terms of biological role, together with the chaperonin GroEL, plays an essential role in assisting protein folding. The GroEL-GroES system forms a nano-cage that allows encapsulation of the non-native substrate proteins and provides a physical environment optimized to promote and accelerate protein folding. GroES binds to the apical surface of the GroEL ring, thereby capping the opening of the GroEL channel. This Bacillus cereus (strain ATCC 14579 / DSM 31 / CCUG 7414 / JCM 2152 / NBRC 15305 / NCIMB 9373 / NCTC 2599 / NRRL B-3711) protein is Co-chaperonin GroES.